A 252-amino-acid chain; its full sequence is 3-dehydroquinate dehydratase (252 aa).

3-dehydroquinate is bound by residues 46–48 (EWR) and arginine 82. Histidine 143 serves as the catalytic Proton donor/acceptor. Lysine 170 (schiff-base intermediate with substrate) is an active-site residue. Residues arginine 212, serine 231, and glutamine 235 each coordinate 3-dehydroquinate.

This sequence belongs to the type-I 3-dehydroquinase family. Homodimer.

It carries out the reaction 3-dehydroquinate = 3-dehydroshikimate + H2O. It functions in the pathway metabolic intermediate biosynthesis; chorismate biosynthesis; chorismate from D-erythrose 4-phosphate and phosphoenolpyruvate: step 3/7. Its function is as follows. Involved in the third step of the chorismate pathway, which leads to the biosynthesis of aromatic amino acids. Catalyzes the cis-dehydration of 3-dehydroquinate (DHQ) and introduces the first double bond of the aromatic ring to yield 3-dehydroshikimate. In Listeria innocua serovar 6a (strain ATCC BAA-680 / CLIP 11262), this protein is 3-dehydroquinate dehydratase.